The following is a 418-amino-acid chain: Gamma-glutamyl phosphate reductase (418 aa).

Belongs to the gamma-glutamyl phosphate reductase family.

It is found in the cytoplasm. It carries out the reaction L-glutamate 5-semialdehyde + phosphate + NADP(+) = L-glutamyl 5-phosphate + NADPH + H(+). It functions in the pathway amino-acid biosynthesis; L-proline biosynthesis; L-glutamate 5-semialdehyde from L-glutamate: step 2/2. Catalyzes the NADPH-dependent reduction of L-glutamate 5-phosphate into L-glutamate 5-semialdehyde and phosphate. The product spontaneously undergoes cyclization to form 1-pyrroline-5-carboxylate. The polypeptide is Gamma-glutamyl phosphate reductase (Desulfatibacillum aliphaticivorans).